A 432-amino-acid chain; its full sequence is Adenylosuccinate synthetase (432 aa).

GTP is bound by residues 12–18 (GDEGKGK) and 40–42 (GHT). Asp13 (proton acceptor) is an active-site residue. Mg(2+) contacts are provided by Asp13 and Gly40. IMP-binding positions include 13 to 16 (DEGK), 38 to 41 (NAGH), Thr130, Arg144, Gln225, Thr240, and Arg304. His41 acts as the Proton donor in catalysis. Substrate is bound at residue 300-306 (ATTGRRR). GTP contacts are provided by residues Arg306, 332-334 (KLD), and 415-417 (SVG).

This sequence belongs to the adenylosuccinate synthetase family. In terms of assembly, homodimer. Requires Mg(2+) as cofactor.

It is found in the cytoplasm. The enzyme catalyses IMP + L-aspartate + GTP = N(6)-(1,2-dicarboxyethyl)-AMP + GDP + phosphate + 2 H(+). The protein operates within purine metabolism; AMP biosynthesis via de novo pathway; AMP from IMP: step 1/2. Plays an important role in the de novo pathway of purine nucleotide biosynthesis. Catalyzes the first committed step in the biosynthesis of AMP from IMP. This chain is Adenylosuccinate synthetase, found in Syntrophus aciditrophicus (strain SB).